A 187-amino-acid chain; its full sequence is Dihydrofolate reductase 2, mitochondrial (187 aa).

One can recognise a DHFR domain in the interval leucine 4–lysine 185. NADP(+) is bound by residues alanine 10 and glycine 16–aspartate 22. Substrate is bound at residue glutamate 31–glutamine 36. Arginine 55–threonine 57 is an NADP(+) binding site. Residue arginine 71 participates in substrate binding. Residues serine 77–glutamate 79 and glycine 117–glutamate 124 contribute to the NADP(+) site.

Belongs to the dihydrofolate reductase family. In terms of tissue distribution, expressed in numerous cell lines.

The protein localises to the mitochondrion. It localises to the mitochondrion matrix. It is found in the mitochondrion inner membrane. The enzyme catalyses (6S)-5,6,7,8-tetrahydrofolate + NADP(+) = 7,8-dihydrofolate + NADPH + H(+). It functions in the pathway cofactor biosynthesis; tetrahydrofolate biosynthesis; 5,6,7,8-tetrahydrofolate from 7,8-dihydrofolate: step 1/1. In terms of biological role, key enzyme in folate metabolism. Contributes to the de novo mitochondrial thymidylate biosynthesis pathway. Required to prevent uracil accumulation in mtDNA. Binds its own mRNA and that of DHFR. The polypeptide is Dihydrofolate reductase 2, mitochondrial (Homo sapiens (Human)).